The primary structure comprises 388 residues: LL-diaminopimelate aminotransferase (388 aa).

Substrate-binding residues include tyrosine 13, glycine 38, lysine 102, tyrosine 126, and asparagine 176. Residues 101-102 (SK), tyrosine 126, asparagine 176, tyrosine 207, and 235-237 (SLS) each bind pyridoxal 5'-phosphate. An N6-(pyridoxal phosphate)lysine modification is found at lysine 238. Arginine 246 serves as a coordination point for pyridoxal 5'-phosphate. Substrate is bound at residue arginine 364.

This sequence belongs to the class-I pyridoxal-phosphate-dependent aminotransferase family. LL-diaminopimelate aminotransferase subfamily. As to quaternary structure, homodimer. Pyridoxal 5'-phosphate is required as a cofactor.

The catalysed reaction is (2S,6S)-2,6-diaminopimelate + 2-oxoglutarate = (S)-2,3,4,5-tetrahydrodipicolinate + L-glutamate + H2O + H(+). Its pathway is amino-acid biosynthesis; L-lysine biosynthesis via DAP pathway; LL-2,6-diaminopimelate from (S)-tetrahydrodipicolinate (aminotransferase route): step 1/1. In terms of biological role, involved in the synthesis of meso-diaminopimelate (m-DAP or DL-DAP), required for both lysine and peptidoglycan biosynthesis. Catalyzes the direct conversion of tetrahydrodipicolinate to LL-diaminopimelate. The sequence is that of LL-diaminopimelate aminotransferase from Dehalococcoides mccartyi (strain ATCC BAA-2100 / JCM 16839 / KCTC 5957 / BAV1).